We begin with the raw amino-acid sequence, 37 residues long: Chorion class CB protein PCH12 (37 aa).

The central domain stretch occupies residues 1–26 (DGIFPTVGAGDVWYGCGDGAVGIVAE). Positions 27-37 (TPFASTTTNPA) are right arm.

It belongs to the chorion protein family.

In terms of biological role, this protein is one of many from the eggshell of the silk moth. The chain is Chorion class CB protein PCH12 from Antheraea polyphemus (Polyphemus moth).